The chain runs to 289 residues: MQGILSIQSHVSFGHAGNSSAVFPMQRMGFEVWPIHTVQFSNHTQYQEGWTGRAFAAEDISELVRGLGNIGALEKCQAVLTGYQGSAEQCLAVEDTVAKVKQANPNALYVCDPVMGAPDKGCIVAPGIAENLLTRLMPMADVIVPNQFELSQFAEMEIHSLDDAITACQRALAKGPKVVLVKHLYCLENGSFNMLLATQEGIYLAKRPQFEFAKQPVGVGDLISAIFTSGLLKGWSPKQAFQHCHDACYGVLSATYHAGEWELQTIAAQQEFVEPSKHFPIEEVELEMA.

Substrate-binding positions include S9 and 44-45 (TQ). The ATP site is built by D112, V144, E149, and K182. Substrate is bound at residue D221.

Belongs to the pyridoxine kinase family. PdxY subfamily. Homodimer. It depends on Mg(2+) as a cofactor.

It carries out the reaction pyridoxal + ATP = pyridoxal 5'-phosphate + ADP + H(+). It participates in cofactor metabolism; pyridoxal 5'-phosphate salvage; pyridoxal 5'-phosphate from pyridoxal: step 1/1. Functionally, pyridoxal kinase involved in the salvage pathway of pyridoxal 5'-phosphate (PLP). Catalyzes the phosphorylation of pyridoxal to PLP. This chain is Pyridoxal kinase PdxY, found in Vibrio parahaemolyticus serotype O3:K6 (strain RIMD 2210633).